Here is a 288-residue protein sequence, read N- to C-terminus: Bifunctional protein FolD (288 aa).

NADP(+)-binding positions include Gly166 to Ser168 and Ile232.

Belongs to the tetrahydrofolate dehydrogenase/cyclohydrolase family. As to quaternary structure, homodimer.

It catalyses the reaction (6R)-5,10-methylene-5,6,7,8-tetrahydrofolate + NADP(+) = (6R)-5,10-methenyltetrahydrofolate + NADPH. The catalysed reaction is (6R)-5,10-methenyltetrahydrofolate + H2O = (6R)-10-formyltetrahydrofolate + H(+). The protein operates within one-carbon metabolism; tetrahydrofolate interconversion. Catalyzes the oxidation of 5,10-methylenetetrahydrofolate to 5,10-methenyltetrahydrofolate and then the hydrolysis of 5,10-methenyltetrahydrofolate to 10-formyltetrahydrofolate. This chain is Bifunctional protein FolD, found in Escherichia fergusonii (strain ATCC 35469 / DSM 13698 / CCUG 18766 / IAM 14443 / JCM 21226 / LMG 7866 / NBRC 102419 / NCTC 12128 / CDC 0568-73).